Here is a 55-residue protein sequence, read N- to C-terminus: ATP synthase F(0) complex subunit 8 (55 aa).

The helical transmembrane segment at Asn7 to Leu29 threads the bilayer.

This sequence belongs to the ATPase protein 8 family. As to quaternary structure, component of the ATP synthase complex composed at least of ATP5F1A/subunit alpha, ATP5F1B/subunit beta, ATP5MC1/subunit c (homooctomer), MT-ATP6/subunit a, MT-ATP8/subunit 8, ATP5ME/subunit e, ATP5MF/subunit f, ATP5MG/subunit g, ATP5MK/subunit k, ATP5MJ/subunit j, ATP5F1C/subunit gamma, ATP5F1D/subunit delta, ATP5F1E/subunit epsilon, ATP5PF/subunit F6, ATP5PB/subunit b, ATP5PD/subunit d, ATP5PO/subunit OSCP. ATP synthase complex consists of a soluble F(1) head domain (subunits alpha(3) and beta(3)) - the catalytic core - and a membrane F(0) domain - the membrane proton channel (subunits c, a, 8, e, f, g, k and j). These two domains are linked by a central stalk (subunits gamma, delta, and epsilon) rotating inside the F1 region and a stationary peripheral stalk (subunits F6, b, d, and OSCP).

The protein resides in the mitochondrion membrane. In terms of biological role, subunit 8, of the mitochondrial membrane ATP synthase complex (F(1)F(0) ATP synthase or Complex V) that produces ATP from ADP in the presence of a proton gradient across the membrane which is generated by electron transport complexes of the respiratory chain. ATP synthase complex consist of a soluble F(1) head domain - the catalytic core - and a membrane F(1) domain - the membrane proton channel. These two domains are linked by a central stalk rotating inside the F(1) region and a stationary peripheral stalk. During catalysis, ATP synthesis in the catalytic domain of F(1) is coupled via a rotary mechanism of the central stalk subunits to proton translocation. In vivo, can only synthesize ATP although its ATP hydrolase activity can be activated artificially in vitro. Part of the complex F(0) domain. In Musophaga violacea (Violet turaco), this protein is ATP synthase F(0) complex subunit 8.